The following is a 364-amino-acid chain: Dihydroorotase (364 aa).

Zn(2+) is bound by residues histidine 14, histidine 16, lysine 98, histidine 137, histidine 180, and aspartate 258. Lysine 98 is subject to N6-carboxylysine.

Belongs to the metallo-dependent hydrolases superfamily. DHOase family. Class II DHOase subfamily. Zn(2+) is required as a cofactor.

It carries out the reaction (S)-dihydroorotate + H2O = N-carbamoyl-L-aspartate + H(+). The protein operates within pyrimidine metabolism; UMP biosynthesis via de novo pathway; (S)-dihydroorotate from bicarbonate: step 3/3. Catalyzes the conversion of ureidosuccinic acid (USA) to dihydroorotate, the third step of the de novo pyrimidine biosynthetic pathway. The chain is Dihydroorotase (URA4) from Saccharomyces cerevisiae (strain ATCC 204508 / S288c) (Baker's yeast).